Reading from the N-terminus, the 411-residue chain is S-inosyl-L-homocysteine hydrolase (411 aa).

The substrate site is built by Asp-121 and Glu-146. 147–149 (TTT) is a binding site for NAD(+). Substrate contacts are provided by Lys-176 and Asp-180. NAD(+) is bound by residues Asn-181, 210–215 (GYGWCG), Glu-233, Asn-268, 289–291 (SGH), and Asn-335.

Belongs to the adenosylhomocysteinase family. NAD(+) is required as a cofactor.

Its subcellular location is the cytoplasm. The enzyme catalyses S-inosyl-L-homocysteine + H2O = L-homocysteine + inosine. The protein operates within amino-acid biosynthesis; S-adenosyl-L-methionine biosynthesis. Its function is as follows. Catalyzes the hydrolysis of S-inosyl-L-homocysteine (SIH) to L-homocysteine (Hcy) and inosine. Likely functions in a S-adenosyl-L-methionine (SAM) recycling pathway from S-adenosyl-L-homocysteine (SAH) produced from SAM-dependent methylation reactions. Can also catalyze the reverse reaction in vitro, i.e. the synthesis of SIH from Hcy and inosine. The polypeptide is S-inosyl-L-homocysteine hydrolase (Methanosarcina mazei (strain ATCC BAA-159 / DSM 3647 / Goe1 / Go1 / JCM 11833 / OCM 88) (Methanosarcina frisia)).